The following is a 732-amino-acid chain: Polyribonucleotide nucleotidyltransferase (732 aa).

Positions 516 and 522 each coordinate Mg(2+). The 61-residue stretch at 582–642 (PSSHTITVHP…PKVIAACDYI (61 aa)) folds into the KH domain. Residues 659 to 726 (GDILKGKIKR…KGHKIELGLR (68 aa)) form the S1 motif domain.

The protein belongs to the polyribonucleotide nucleotidyltransferase family. The cofactor is Mg(2+).

It localises to the cytoplasm. The enzyme catalyses RNA(n+1) + phosphate = RNA(n) + a ribonucleoside 5'-diphosphate. Involved in mRNA degradation. Catalyzes the phosphorolysis of single-stranded polyribonucleotides processively in the 3'- to 5'-direction. This is Polyribonucleotide nucleotidyltransferase from Nitratiruptor sp. (strain SB155-2).